Here is a 226-residue protein sequence, read N- to C-terminus: Putative N-acetylmannosamine-6-phosphate 2-epimerase 1 (226 aa).

The protein belongs to the NanE family.

The enzyme catalyses an N-acyl-D-glucosamine 6-phosphate = an N-acyl-D-mannosamine 6-phosphate. It participates in amino-sugar metabolism; N-acetylneuraminate degradation; D-fructose 6-phosphate from N-acetylneuraminate: step 3/5. In terms of biological role, converts N-acetylmannosamine-6-phosphate (ManNAc-6-P) to N-acetylglucosamine-6-phosphate (GlcNAc-6-P). The sequence is that of Putative N-acetylmannosamine-6-phosphate 2-epimerase 1 from Salmonella paratyphi A (strain ATCC 9150 / SARB42).